The chain runs to 314 residues: Ribosomal protein L11 methyltransferase (314 aa).

S-adenosyl-L-methionine is bound by residues Thr-163, Gly-184, Asp-206, and Asn-248.

It belongs to the methyltransferase superfamily. PrmA family.

It localises to the cytoplasm. It catalyses the reaction L-lysyl-[protein] + 3 S-adenosyl-L-methionine = N(6),N(6),N(6)-trimethyl-L-lysyl-[protein] + 3 S-adenosyl-L-homocysteine + 3 H(+). Methylates ribosomal protein L11. The sequence is that of Ribosomal protein L11 methyltransferase from Lactobacillus delbrueckii subsp. bulgaricus (strain ATCC 11842 / DSM 20081 / BCRC 10696 / JCM 1002 / NBRC 13953 / NCIMB 11778 / NCTC 12712 / WDCM 00102 / Lb 14).